Here is a 101-residue protein sequence, read N- to C-terminus: Urease subunit beta (101 aa).

The protein belongs to the urease beta subunit family. As to quaternary structure, heterotrimer of UreA (gamma), UreB (beta) and UreC (alpha) subunits. Three heterotrimers associate to form the active enzyme.

The protein resides in the cytoplasm. It carries out the reaction urea + 2 H2O + H(+) = hydrogencarbonate + 2 NH4(+). Its pathway is nitrogen metabolism; urea degradation; CO(2) and NH(3) from urea (urease route): step 1/1. This is Urease subunit beta from Actinobacillus pleuropneumoniae serotype 5b (strain L20).